Consider the following 940-residue polypeptide: UvrABC system protein A (940 aa).

31 to 38 (GLSGSGKS) contributes to the ATP binding site. The segment at 252–279 (CPQCGYSMQELEPRLFSFNNPAGACGTC) adopts a C4-type zinc-finger fold. ABC transporter domains are found at residues 309–586 (WDQK…PNSL) and 606–936 (RDPK…RFLK). Position 639 to 646 (639 to 646 (GVSGSGKS)) interacts with ATP. The C4-type zinc finger occupies 739-765 (CEACQGDGVIKVEMHFLPDVYVPCDVC).

Belongs to the ABC transporter superfamily. UvrA family. In terms of assembly, forms a heterotetramer with UvrB during the search for lesions.

The protein localises to the cytoplasm. In terms of biological role, the UvrABC repair system catalyzes the recognition and processing of DNA lesions. UvrA is an ATPase and a DNA-binding protein. A damage recognition complex composed of 2 UvrA and 2 UvrB subunits scans DNA for abnormalities. When the presence of a lesion has been verified by UvrB, the UvrA molecules dissociate. This chain is UvrABC system protein A, found in Vibrio parahaemolyticus serotype O3:K6 (strain RIMD 2210633).